Reading from the N-terminus, the 1213-residue chain is DNA-directed RNA polymerase subunit beta (1213 aa).

Positions 1153-1213 (RDMDEDSSEH…ADESDGKVSK (61 aa)) are disordered. The span at 1171–1198 (MAEEQEKKKLAEETGKSENKEDSNETAD) shows a compositional bias: basic and acidic residues.

It belongs to the RNA polymerase beta chain family. As to quaternary structure, the RNAP catalytic core consists of 2 alpha, 1 beta, 1 beta' and 1 omega subunit. When a sigma factor is associated with the core the holoenzyme is formed, which can initiate transcription.

It carries out the reaction RNA(n) + a ribonucleoside 5'-triphosphate = RNA(n+1) + diphosphate. DNA-dependent RNA polymerase catalyzes the transcription of DNA into RNA using the four ribonucleoside triphosphates as substrates. The protein is DNA-directed RNA polymerase subunit beta of Lactobacillus acidophilus (strain ATCC 700396 / NCK56 / N2 / NCFM).